Consider the following 281-residue polypeptide: Insulin-like growth factor-binding protein 2 (281 aa).

The signal sequence occupies residues 1 to 21 (MVLSEHLLVLLGAVLCAPALS). The 84-residue stretch at 23–106 (VLFRCPPCSP…VLGLGTCGKR (84 aa)) folds into the IGFBP N-terminal domain. Intrachain disulfides connect Cys27/Cys56, Cys30/Cys58, Cys38/Cys59, Cys47/Cys62, Cys70/Cys83, and Cys77/Cys103. Disordered regions lie at residues 107–127 (RDAE…DQSD) and 139–180 (PAVP…RPAR). Basic and acidic residues predominate over residues 156–176 (VNRERANEQHRSKTNKSEDKK). Positions 180-262 (RSLCQLQLDQ…SPTVRGDPEC (83 aa)) constitute a Thyroglobulin type-1 domain. 3 disulfides stabilise this stretch: Cys183–Cys217, Cys228–Cys239, and Cys241–Cys262. The Cell attachment site motif lies at 257–259 (RGD).

In terms of assembly, interacts with igf1 and igf2.

It localises to the secreted. Functionally, IGF-binding proteins prolong the half-life of the IGFs and have been shown to either inhibit or stimulate the growth promoting effects of the IGFs on cell culture. They alter the interaction of IGFs with their cell surface receptors. This Xenopus laevis (African clawed frog) protein is Insulin-like growth factor-binding protein 2 (igfbp2).